Here is a 125-residue protein sequence, read N- to C-terminus: Classical arabinogalactan protein 27 (125 aa).

Positions 1 to 21 (MASSILLTLITFIFLSSLSLS) are cleaved as a signal peptide. Over residues 20–36 (LSSPTTNTIPSSQTISP) the composition is skewed to low complexity. Residues 20–95 (LSSPTTNTIP…ASPPASSLAS (76 aa)) form a disordered region. The span at 53–66 (AVSSTQTIPSSSTL) shows a compositional bias: polar residues. The span at 77–95 (DPDPAFAPSASPPASSLAS) shows a compositional bias: low complexity. A lipid anchor (GPI-anchor amidated serine) is attached at serine 98. The propeptide at 99–125 (QAPGVFIYFVFAAVYCFSLRLLAVSAI) is removed in mature form.

It belongs to the classical AGP family. In terms of processing, O-glycosylated on the hydroxyproline residues.

Its subcellular location is the cell membrane. Functionally, proteoglycan that seems to be implicated in diverse developmental roles such as differentiation, cell-cell recognition, embryogenesis and programmed cell death. The chain is Classical arabinogalactan protein 27 (AGP27) from Arabidopsis thaliana (Mouse-ear cress).